The sequence spans 114 residues: Chaperone protein YscY (114 aa).

Binds to YscX.

Its subcellular location is the cytoplasm. Functionally, required for Yop secretion. Functions probably as a chaperone which stabilizes YscX within the cell, before its secretion. The protein is Chaperone protein YscY (yscY) of Yersinia enterocolitica serotype O:8 / biotype 1B (strain NCTC 13174 / 8081).